An 865-amino-acid chain; its full sequence is Serine/threonine-protein kinase greatwall (865 aa).

An N-acetylmethionine modification is found at Met1. The 788-residue stretch at 34–821 (FTIVKPISRG…MRELKQHPLF (788 aa)) folds into the Protein kinase domain. ATP contacts are provided by residues 40 to 48 (ISRGAFGKV) and Lys61. Asp155 serves as the catalytic Proton acceptor. Phosphothreonine occurs at positions 206 and 221. Phosphoserine is present on residues Ser362 and Ser442. At Thr508 the chain carries Phosphothreonine. 4 positions are modified to phosphoserine: Ser545, Ser619, Ser644, and Ser655. Phosphothreonine is present on Thr708. Ser711 bears the Phosphoserine mark. Thr727 is subject to Phosphothreonine; by CDK1. Positions 822–865 (SEVDWENLQHQTMPFVPQPDDETDTSYFEARNNAQHLTISGFSL) constitute an AGC-kinase C-terminal domain. Phosphoserine occurs at positions 861 and 864.

Belongs to the protein kinase superfamily. AGC Ser/Thr protein kinase family. In terms of processing, phosphorylation at Thr-727 by CDK1 during M phase activates its kinase activity. Maximum phosphorylation occurs in prometaphase.

The protein resides in the cytoplasm. Its subcellular location is the cytoskeleton. The protein localises to the microtubule organizing center. It is found in the centrosome. It localises to the nucleus. The enzyme catalyses L-seryl-[protein] + ATP = O-phospho-L-seryl-[protein] + ADP + H(+). The catalysed reaction is L-threonyl-[protein] + ATP = O-phospho-L-threonyl-[protein] + ADP + H(+). Functionally, serine/threonine kinase that plays a key role in M phase by acting as a regulator of mitosis entry and maintenance. Acts by promoting the inactivation of protein phosphatase 2A (PP2A) during M phase: does not directly inhibit PP2A but acts by mediating phosphorylation and subsequent activation of ARPP19 and ENSA at 'Ser-62' and 'Ser-67', respectively. ARPP19 and ENSA are phosphatase inhibitors that specifically inhibit the PPP2R2D (PR55-delta) subunit of PP2A. Inactivation of PP2A during M phase is essential to keep cyclin-B1-CDK1 activity high. Following DNA damage, it is also involved in checkpoint recovery by being inhibited. This chain is Serine/threonine-protein kinase greatwall (Mastl), found in Mus musculus (Mouse).